A 508-amino-acid polypeptide reads, in one-letter code: Probable G-protein coupled receptor 101 (508 aa).

Residues methionine 1–serine 35 lie on the Extracellular side of the membrane. Asparagine 7 and asparagine 13 each carry an N-linked (GlcNAc...) asparagine glycan. The helical transmembrane segment at threonine 36 to leucine 56 threads the bilayer. Over glutamine 57–arginine 68 the chain is Cytoplasmic. A helical membrane pass occupies residues phenylalanine 69–valine 89. Residues alanine 90–alanine 106 are Extracellular-facing. The cysteines at positions 104 and 182 are disulfide-linked. Residues leucine 107–valine 127 traverse the membrane as a helical segment. The Cytoplasmic segment spans residues aspartate 128–tyrosine 149. A helical transmembrane segment spans residues leucine 150–tryptophan 170. Topologically, residues glycine 171–serine 196 are extracellular. The chain crosses the membrane as a helical span at residues valine 197–cysteine 217. Over alanine 218–lysine 399 the chain is Cytoplasmic. The tract at residues asparagine 244–arginine 338 is disordered. Basic and acidic residues-rich tracts occupy residues alanine 250 to glutamate 288 and methionine 318 to arginine 338. The helical transmembrane segment at valine 400–valine 420 threads the bilayer. The Extracellular segment spans residues leucine 421 to glutamine 433. The helical transmembrane segment at tryptophan 434–tyrosine 454 threads the bilayer. At glycine 455–proline 508 the chain is on the cytoplasmic side. The span at glutamate 476 to proline 485 shows a compositional bias: basic and acidic residues. The interval glutamate 476–proline 508 is disordered.

This sequence belongs to the G-protein coupled receptor 1 family.

The protein localises to the cell membrane. Orphan receptor. The protein is Probable G-protein coupled receptor 101 (GPR101) of Homo sapiens (Human).